Here is a 285-residue protein sequence, read N- to C-terminus: tRNA (guanine-N(7)-)-methyltransferase (285 aa).

Residues Gly102, 125-126 (EI), 160-161 (NA), and Cys180 contribute to the S-adenosyl-L-methionine site. Asp183 is an active-site residue. 258-260 (TEE) is an S-adenosyl-L-methionine binding site.

Belongs to the class I-like SAM-binding methyltransferase superfamily. TrmB family. As to quaternary structure, forms a complex with TRM82.

It is found in the nucleus. The catalysed reaction is guanosine(46) in tRNA + S-adenosyl-L-methionine = N(7)-methylguanosine(46) in tRNA + S-adenosyl-L-homocysteine. The protein operates within tRNA modification; N(7)-methylguanine-tRNA biosynthesis. Catalyzes the formation of N(7)-methylguanine at position 46 (m7G46) in tRNA. The chain is tRNA (guanine-N(7)-)-methyltransferase from Candida glabrata (strain ATCC 2001 / BCRC 20586 / JCM 3761 / NBRC 0622 / NRRL Y-65 / CBS 138) (Yeast).